A 164-amino-acid polypeptide reads, in one-letter code: Protein SprT (164 aa).

The 143-residue stretch at 14-156 (QLAESFFKRP…LCRRCRQTLV (143 aa)) folds into the SprT-like domain. Zn(2+) is bound at residue H69. E70 is a catalytic residue. Zn(2+) is bound at residue H73.

This sequence belongs to the SprT family. Zn(2+) is required as a cofactor.

Its subcellular location is the cytoplasm. In Pseudomonas fluorescens (strain ATCC BAA-477 / NRRL B-23932 / Pf-5), this protein is Protein SprT.